Here is a 118-residue protein sequence, read N- to C-terminus: Evasin P1080 (118 aa).

The signal sequence occupies residues 1 to 19 (FFQLAVFVVILFNINLLSA). Disulfide bonds link cysteine 41-cysteine 60, cysteine 45-cysteine 62, and cysteine 56-cysteine 73. N-linked (GlcNAc...) asparagine glycosylation occurs at asparagine 44. N-linked (GlcNAc...) asparagine glycans are attached at residues asparagine 67 and asparagine 104.

Its subcellular location is the secreted. Salivary chemokine-binding protein which binds to host chemokines CXCL1, CXCL2, CXCL3, CXCL4, CXCL5, CXCL6, CXCL10, CXCL11 and CXCL13. This is Evasin P1080 from Ixodes ricinus (Common tick).